Consider the following 459-residue polypeptide: MEDIQKNHEAQRGLQNRHIQLIAIAGTIGTGLFLGAGKTIQMTGPSVIFAYILIGIAMFFFLRTIGEMLYNDPSQHSFLNFVTKYSGIRTGYFTQWSYWLVIVFVCISELTAIGTYIQFWLPHLPLWLIEIVMLALLFGLNTLNSRFFGETEFWFAMIKVAAILGMIVTAIILVASNFHYTTVLSGKTVNDTASLNNIFDGFQLFPHGAWNFVGALQMVMFAFTSMEFIGMTAAETVNPKKSLPKAINQIPVRILLFYVGALLAIMAIFNWHYIPADKSPFVIVFQLIGIKWAAALINFVVLTSAASALNSSLFSATRNMYSLAKQHDKGRLTAFTKLSKAGIPINALYMATALSLLAPVLTLIPQIKNAFNFAASCTTNLFLVVYFITLYTYWQYRKSDDYNPNGFLTPKPTIAVPFIAIIFAIVFASLFFNADTFYPALGAIVWTLIFGLYSHFKKI.

12 consecutive transmembrane segments (helical) span residues 19–39, 42–62, 97–117, 119–139, 153–173, 212–232, 254–274, 281–301, 341–361, 370–390, 412–432, and 436–456; these read IQLI…AGKT, MTGP…FFFL, SYWL…GTYI, FWLP…LLFG, FWFA…AIIL, FVGA…IGMT, ILLF…WHYI, FVIV…NFVV, AGIP…APVL, AFNF…FITL, PTIA…SLFF, and TFYP…YSHF.

It belongs to the amino acid-polyamine-organocation (APC) superfamily. Amino acid transporter (AAT) (TC 2.A.3.1) family.

The protein localises to the cell membrane. Transports L-serine, L-threonine and L-cysteine with high affinity. Stereoselective, with a strong preference for L-serine. Is the main L-serine transporter and is responsible for optimal growth in media containing free amino acids as the sole source of amino acids. Is also the main transporter for L-threonine. In Lactococcus lactis subsp. cremoris (strain MG1363), this protein is Serine permease SerP1.